The chain runs to 294 residues: Putative cuticle collagen 145 (294 aa).

The first 30 residues, 1–30 (MEKILVTFSTGAASIAVLAVLFTVPSLYNT), serve as a signal peptide directing secretion. A compositionally biased stretch (pro residues) spans 100-112 (TCPPGPPGPPGQP). Disordered regions lie at residues 100–133 (TCPPGPPGPPGQPGAPGTPGAPGPKGDDNTATFA) and 148–276 (PQGP…LPGN). Triple-helical region stretches follow at residues 102–127 (PPGPPGPPGQPGAPGTPGAPGPKGDD) and 148–277 (PQGP…PGND). 2 stretches are compositionally biased toward low complexity: residues 164 to 194 (AGPDGQPGFPGQRGNDGFPGAPGAPGDNGQP) and 219 to 265 (APGA…DGQP). One can recognise a Collagen-like domain in the interval 218–276 (GAPGAPGNAGPAGPAGQDGFPGQDGAPGPAGPAGQDGFPGNAGSDGQPGAPGGPGLPGN).

The protein belongs to the cuticular collagen family. As to quaternary structure, collagen polypeptide chains are complexed within the cuticle by disulfide bonds and other types of covalent cross-links.

In terms of biological role, nematode cuticles are composed largely of collagen-like proteins. The cuticle functions both as an exoskeleton and as a barrier to protect the worm from its environment. This Caenorhabditis elegans protein is Putative cuticle collagen 145 (col-145).